The primary structure comprises 286 residues: Polyamine aminopropyltransferase (286 aa).

In terms of domain architecture, PABS spans 5–238 (TMWHETLHDQ…GIMTFAWATD (234 aa)). An S-methyl-5'-thioadenosine-binding site is contributed by glutamine 33. Residues histidine 64 and aspartate 88 each contribute to the spermidine site. S-methyl-5'-thioadenosine contacts are provided by residues glutamate 108 and 140–141 (DG). Aspartate 158 acts as the Proton acceptor in catalysis. Position 158–161 (158–161 (DCTD)) interacts with spermidine. Residue proline 165 participates in S-methyl-5'-thioadenosine binding.

This sequence belongs to the spermidine/spermine synthase family. As to quaternary structure, homodimer or homotetramer.

It is found in the cytoplasm. It carries out the reaction S-adenosyl 3-(methylsulfanyl)propylamine + putrescine = S-methyl-5'-thioadenosine + spermidine + H(+). It functions in the pathway amine and polyamine biosynthesis; spermidine biosynthesis; spermidine from putrescine: step 1/1. In terms of biological role, catalyzes the irreversible transfer of a propylamine group from the amino donor S-adenosylmethioninamine (decarboxy-AdoMet) to putrescine (1,4-diaminobutane) to yield spermidine. In Salmonella schwarzengrund (strain CVM19633), this protein is Polyamine aminopropyltransferase.